The chain runs to 85 residues: Homeobox protein liguleless 3 (85 aa).

One can recognise an ELK domain in the interval 1–21 (ELKEMLLKKYSGCLSRLRSEF). A DNA-binding region (homeobox; TALE-type) is located at residues 22–85 (LKKRKKGKLP…NQRKRHWKPS (64 aa)).

Belongs to the TALE/KNOX homeobox family.

The protein resides in the nucleus. Probably binds to the DNA sequence 5'-TGAC-3'. This is Homeobox protein liguleless 3 (LG3) from Zea mays (Maize).